We begin with the raw amino-acid sequence, 488 residues long: MFLWLKCFCTLIIVTIAKNSSAKIPHCKYDETINISHFKRLNDAYIYEHFEIPANLTGEFDYKELMDGSKVPTEFPNLRGCICKVRPCIRICCARKNILSNGECSDGVKNEIKLTMLDLTMQDILLTDPTLAELNMIPQYNSTELLILREQFQPCDEIVSLKRDEYTILKDGSILLHTSAEILSNDQYCLYPEIYSDFPETIRIINRRCYRNVMPGIAQLSVISVVGFILTLAVYLSVEKLRNLLGKCLICSLFSMFMEYFIWTMDYFRLLQSICSAAGYMKYFFSMSSYLWFSVVSFHLWELFTSLNRHEPQYRFLIYNTFVWCTAAIPTVVIFSMNQMWENDPGKSEWLPLVGYFGCSVKDWNSSSWFYSHIPIVILNSFNVIMFVLTAIYIWKVKKGVKSFAQHDERNTTCLEFNVQTYIQFVRLFLIMGASWLLDQLTRLAEDSHLLLDTIVLNLTVYLNAAFGILIFVLLILKGSTFKMIMER.

The signal sequence occupies residues 1 to 17 (MFLWLKCFCTLIIVTIA). Topologically, residues 18 to 215 (KNSSAKIPHC…NRRCYRNVMP (198 aa)) are extracellular. Residues Asn-19, Asn-34, and Asn-55 are each glycosylated (N-linked (GlcNAc...) asparagine). 5 disulfide bridges follow: Cys-27–Cys-81, Cys-83–Cys-88, Cys-92–Cys-189, Cys-93–Cys-104, and Cys-155–Cys-209. Asn-141 carries N-linked (GlcNAc...) asparagine glycosylation. A helical membrane pass occupies residues 216–236 (GIAQLSVISVVGFILTLAVYL). Over 237–247 (SVEKLRNLLGK) the chain is Cytoplasmic. The chain crosses the membrane as a helical span at residues 248-268 (CLICSLFSMFMEYFIWTMDYF). The Extracellular segment spans residues 269–283 (RLLQSICSAAGYMKY). Residues 284-304 (FFSMSSYLWFSVVSFHLWELF) form a helical membrane-spanning segment. Over 305–315 (TSLNRHEPQYR) the chain is Cytoplasmic. A helical transmembrane segment spans residues 316–336 (FLIYNTFVWCTAAIPTVVIFS). Over 337–373 (MNQMWENDPGKSEWLPLVGYFGCSVKDWNSSSWFYSH) the chain is Extracellular. Asn-365 carries an N-linked (GlcNAc...) asparagine glycan. The chain crosses the membrane as a helical span at residues 374 to 394 (IPIVILNSFNVIMFVLTAIYI). Over 395 to 416 (WKVKKGVKSFAQHDERNTTCLE) the chain is Cytoplasmic. A helical membrane pass occupies residues 417–437 (FNVQTYIQFVRLFLIMGASWL). Residues 438–454 (LDQLTRLAEDSHLLLDT) lie on the Extracellular side of the membrane. A helical transmembrane segment spans residues 455 to 475 (IVLNLTVYLNAAFGILIFVLL). Over 476–488 (ILKGSTFKMIMER) the chain is Cytoplasmic.

Belongs to the G-protein coupled receptor 2 family. Mth subfamily.

The protein resides in the cell membrane. The sequence is that of Probable G-protein coupled receptor Mth-like 12 (mthl12) from Drosophila melanogaster (Fruit fly).